A 173-amino-acid polypeptide reads, in one-letter code: Fimbrial protein PrsE (173 aa).

The first 24 residues, 1–24 (MKKIRGLCLPVMLGAVLMSQHVHA), serve as a signal peptide directing secretion.

It is found in the secreted. The protein resides in the fimbrium. In terms of biological role, fimbriae (also called pili), polar filaments radiating from the surface of the bacterium to a length of 0.5-1.5 micrometers and numbering 100-300 per cell, enable bacteria to colonize the epithelium of specific host organs. This chain is Fimbrial protein PrsE (prsE), found in Escherichia coli.